We begin with the raw amino-acid sequence, 1301 residues long: Tyrosine-protein phosphatase 99A (1301 aa).

An N-terminal signal peptide occupies residues 1 to 28 (MPRPQHHALLRAMLKLLLFASIAEHCAT). The Extracellular portion of the chain corresponds to 29-394 (ALPTNSSNSP…RQSHNDYNLA (366 aa)). The interval 31–63 (PTNSSNSPSSPSPFTVASLPPTTASSSSSPAVI) is disordered. An N-linked (GlcNAc...) asparagine glycan is attached at Asn-33. The span at 33–63 (NSSNSPSSPSPFTVASLPPTTASSSSSPAVI) shows a compositional bias: low complexity. Fibronectin type-III domains lie at 66–165 (SSFD…YAAV), 173–269 (KPQN…TDVG), and 270–376 (GPSA…LQPN). N-linked (GlcNAc...) asparagine glycosylation is found at Asn-176, Asn-212, Asn-278, Asn-322, and Asn-336. Residues 395–415 (VLVGIIFSCFGIILIIMAFFL) traverse the membrane as a helical segment. The Cytoplasmic portion of the chain corresponds to 416–1301 (WSRKCFHAAY…TDAQNLDIVG (886 aa)). Tyrosine-protein phosphatase domains follow at residues 476–741 (FSRE…LVEA) and 764–1016 (LEQQ…LSFL). Cys-682 serves as the catalytic Phosphocysteine intermediate. Over residues 1092 to 1106 (TALNETVSTPSTDTN) the composition is skewed to polar residues. Disordered regions lie at residues 1092–1199 (TALN…PTIP) and 1257–1281 (VGDLLMNNADNSPTASPTITNNNHI). A compositionally biased stretch (low complexity) spans 1107–1130 (PSLLPILSLLPPTVAPLSSSSSTT). Pro residues predominate over residues 1131-1142 (PPTPSTPTPQPP). Over residues 1150-1161 (HSPSDLSHQISS) the composition is skewed to polar residues. Residues 1162–1188 (TVANAASPVTPATASASAGATPTTPMT) are compositionally biased toward low complexity. Residues 1264–1273 (NADNSPTASP) are compositionally biased toward polar residues.

The protein belongs to the protein-tyrosine phosphatase family. Receptor class subfamily. In terms of tissue distribution, selectively expressed in a subset of axons and pioneer neurons (including aCC and RP2) in the embryo.

It localises to the membrane. It carries out the reaction O-phospho-L-tyrosyl-[protein] + H2O = L-tyrosyl-[protein] + phosphate. In terms of biological role, may play a key role in signal transduction and growth control. May have a role in the establishment of the intersegmental and segmental nerves. The protein is Tyrosine-protein phosphatase 99A (Ptp99A) of Drosophila melanogaster (Fruit fly).